Reading from the N-terminus, the 333-residue chain is MREAMFYEKLDDNKVRCHICPRHCIIKEGERGFCWNRENINGVLYAVGYGKVCSLAIDPIEKKPLFHFYPTTQVVSLAIGGCNFRCLHCQNWTISQFPPDEIPYREMTPEEIVEVAIRYNCPGISYTYTEPTVYYEFMYDTSVIARENGMFNVMITNGYIEKEPLKALPVDAMNIDIKGNADFYKKVCKATLEPVLETCKLAKKLGIWVEVTNLIVPNYNDNIDDLLFIIHFVRDELGRETPLHFSRFHPDYKLTDVPPTPIETLEMARNLAIEEGLKYVYIGNVPGHEGENTYCPNCGALLIERYIFNAKIINLDVETKRCKICGEKIDIVL.

In terms of domain architecture, Radical SAM core spans 67-274 (HFYPTTQVVS…LEMARNLAIE (208 aa)). [4Fe-4S] cluster contacts are provided by Cys-82, Cys-86, and Cys-89.

It depends on [4Fe-4S] cluster as a cofactor.

This is an uncharacterized protein from Methanocaldococcus jannaschii (strain ATCC 43067 / DSM 2661 / JAL-1 / JCM 10045 / NBRC 100440) (Methanococcus jannaschii).